A 142-amino-acid chain; its full sequence is Large ribosomal subunit protein uL16 (142 aa).

This sequence belongs to the universal ribosomal protein uL16 family. In terms of assembly, part of the 50S ribosomal subunit.

Its function is as follows. Binds 23S rRNA and is also seen to make contacts with the A and possibly P site tRNAs. The protein is Large ribosomal subunit protein uL16 of Thermosipho melanesiensis (strain DSM 12029 / CIP 104789 / BI429).